The chain runs to 79 residues: Small ribosomal subunit protein uS17 (79 aa).

This sequence belongs to the universal ribosomal protein uS17 family. Part of the 30S ribosomal subunit.

In terms of biological role, one of the primary rRNA binding proteins, it binds specifically to the 5'-end of 16S ribosomal RNA. This Caulobacter vibrioides (strain NA1000 / CB15N) (Caulobacter crescentus) protein is Small ribosomal subunit protein uS17.